The sequence spans 370 residues: GTPase Obg (370 aa).

An Obg domain is found at 1-159 (MKFIDEARIE…RMLRLELKVL (159 aa)). The interval 127–146 (NLHFKSSTNRAPRQKTDGKP) is disordered. The OBG-type G domain maps to 160 to 334 (ADVGLLGMPN…LCYAIYDYLA (175 aa)). GTP contacts are provided by residues 166–173 (GMPNAGKS), 191–195 (FTTLA), 213–216 (DIPG), 284–287 (NKLD), and 315–317 (SAL). 2 residues coordinate Mg(2+): Ser-173 and Thr-193.

It belongs to the TRAFAC class OBG-HflX-like GTPase superfamily. OBG GTPase family. In terms of assembly, monomer. It depends on Mg(2+) as a cofactor.

Its subcellular location is the cytoplasm. An essential GTPase which binds GTP, GDP and possibly (p)ppGpp with moderate affinity, with high nucleotide exchange rates and a fairly low GTP hydrolysis rate. Plays a role in control of the cell cycle, stress response, ribosome biogenesis and in those bacteria that undergo differentiation, in morphogenesis control. In Burkholderia lata (strain ATCC 17760 / DSM 23089 / LMG 22485 / NCIMB 9086 / R18194 / 383), this protein is GTPase Obg.